Here is a 95-residue protein sequence, read N- to C-terminus: HIG1 domain family member 1A, mitochondrial (95 aa).

Ser-2 is subject to N-acetylserine. One can recognise an HIG1 domain in the interval 2-93 (STNTDLSLSS…YQEFWANPKP (92 aa)). Ser-8 carries the phosphoserine modification. The next 2 membrane-spanning stretches (helical) occupy residues 28–48 (PFVP…LYKL) and 69–89 (GFVV…EFWA).

Associates with cytochrome c oxidase (COX, complex IV); proposed complex component. Also associates with respiratory chain supercomplexes.

The protein resides in the mitochondrion membrane. Its subcellular location is the mitochondrion inner membrane. Its function is as follows. Proposed subunit of cytochrome c oxidase (COX, complex IV), which is the terminal component of the mitochondrial respiratory chain that catalyzes the reduction of oxygen to water. May play a role in the assembly of respiratory supercomplexes. The chain is HIG1 domain family member 1A, mitochondrial (Higd1a) from Mus musculus (Mouse).